Consider the following 430-residue polypeptide: Histidine--tRNA ligase (430 aa).

It belongs to the class-II aminoacyl-tRNA synthetase family. As to quaternary structure, homodimer.

The protein localises to the cytoplasm. It carries out the reaction tRNA(His) + L-histidine + ATP = L-histidyl-tRNA(His) + AMP + diphosphate + H(+). This Anaplasma marginale (strain St. Maries) protein is Histidine--tRNA ligase.